A 319-amino-acid chain; its full sequence is ATP-dependent 6-phosphofructokinase (319 aa).

Position 11 (glycine 11) interacts with ATP. 21-25 (RAVVR) contacts ADP. ATP is bound by residues 72–73 (RC) and 102–105 (GDGS). Aspartate 103 provides a ligand contact to Mg(2+). 125–127 (TID) provides a ligand contact to substrate. Aspartate 127 serves as the catalytic Proton acceptor. Arginine 154 contacts ADP. Substrate contacts are provided by residues arginine 162 and 169–171 (MGR). Residues 185 to 187 (GAE), arginine 211, and 213 to 215 (KKH) contribute to the ADP site. Substrate-binding positions include glutamate 222, arginine 243, and 249-252 (HMQR).

Belongs to the phosphofructokinase type A (PFKA) family. ATP-dependent PFK group I subfamily. Prokaryotic clade 'B1' sub-subfamily. In terms of assembly, homotetramer. Mg(2+) serves as cofactor.

It is found in the cytoplasm. The catalysed reaction is beta-D-fructose 6-phosphate + ATP = beta-D-fructose 1,6-bisphosphate + ADP + H(+). It participates in carbohydrate degradation; glycolysis; D-glyceraldehyde 3-phosphate and glycerone phosphate from D-glucose: step 3/4. With respect to regulation, allosterically activated by ADP and other diphosphonucleosides, and allosterically inhibited by phosphoenolpyruvate. Its function is as follows. Catalyzes the phosphorylation of D-fructose 6-phosphate to fructose 1,6-bisphosphate by ATP, the first committing step of glycolysis. This chain is ATP-dependent 6-phosphofructokinase, found in Macrococcus caseolyticus (strain JCSC5402) (Macrococcoides caseolyticum).